A 426-amino-acid polypeptide reads, in one-letter code: MIDVKDLSENPDKFRASQRARGADESVVDAIISADSARRAALIRYENLRAEQNVFGKKVAQAKGEEKQALLAEVKELANSVKAASAEADAAQTKQEELLRTVPNLVEDGVPEGGEDDYVVVKTVGTPREFPDFEPKDHLEIGELIGAIDMERGAKVSGSRFYFLRGVGARLEMALLQMAMEQAIEAGFIPMITPTLVRPETMQGTGFDVKHDAEIYRLAEDDLYLVGTSEVALAGYHADEILDFSAGPIRYAGQSSCYRREAGSHGKDTRGIIRVHQFNKVEMFIYTTVEEAAAEHQRLLAWEEEMLAKCELPYRVIDTAAGDLGNSAARKYDCEAWVPTQGAYRELTSTSNCTTFQARRLNIRERAVNAEGVAKGTRAVATLNGTLATTRWIVALLEHHQNADGSVNVPKALQKYLGGLEVLPVL.

A compositionally biased stretch (basic and acidic residues) spans 1-15 (MIDVKDLSENPDKFR). Residues 1–22 (MIDVKDLSENPDKFRASQRARG) are disordered. 228–230 (TSE) contributes to the L-serine binding site. ATP-binding positions include 259-261 (RRE) and Val275. An L-serine-binding site is contributed by Glu282. Residue 346 to 349 (ELTS) participates in ATP binding. Thr386 contributes to the L-serine binding site.

The protein belongs to the class-II aminoacyl-tRNA synthetase family. Type-1 seryl-tRNA synthetase subfamily. In terms of assembly, homodimer. The tRNA molecule binds across the dimer.

The protein resides in the cytoplasm. It catalyses the reaction tRNA(Ser) + L-serine + ATP = L-seryl-tRNA(Ser) + AMP + diphosphate + H(+). It carries out the reaction tRNA(Sec) + L-serine + ATP = L-seryl-tRNA(Sec) + AMP + diphosphate + H(+). It participates in aminoacyl-tRNA biosynthesis; selenocysteinyl-tRNA(Sec) biosynthesis; L-seryl-tRNA(Sec) from L-serine and tRNA(Sec): step 1/1. Functionally, catalyzes the attachment of serine to tRNA(Ser). Is also able to aminoacylate tRNA(Sec) with serine, to form the misacylated tRNA L-seryl-tRNA(Sec), which will be further converted into selenocysteinyl-tRNA(Sec). This is Serine--tRNA ligase from Pseudarthrobacter chlorophenolicus (strain ATCC 700700 / DSM 12829 / CIP 107037 / JCM 12360 / KCTC 9906 / NCIMB 13794 / A6) (Arthrobacter chlorophenolicus).